The chain runs to 635 residues: MSQTTTNSASETLGFQAEVKQLLHLMIHSLYSNKEIFLRELVSNASDACDKLRFEAIDQPGLLDGDGELAIRVDYDKAARTITISDNGIGLSRDEAVANLGTIARSGTREFFSQLTGDKQKDAQLIGQFGVGFYSSFIVADKVTVLSRRAGLAANEAIRWESDGQGEFSIAPAEKAGRGTDVVLHLRADEDELLNGWKLREILRRYSDHISLPIRMAKEDWDAEKGEQVKGDELETVNQANALWTRNKSDITDEQYREFYKTVSHDYDDPLAWTHNRVEGRSEYTQLLYVPRHAPFDLWDRDARRGVKLYVKRVFIMDDAEQLLPSYLRFVRGVIDSADLPLNVSREILQESRDVRAIREGSAKRVLSLLEDMAENKAEDYATFWTEFGQVLKEGTGEDAANRERIARLLCFASTHDGEQAQTVSFADYVGRMKDGQDKIYYVTADTFTAAANSPHLEIFRKKGIEVLLLSDRVDEWMLSYLREFDGKSLVSVAKGGLDLAELADEEEKKRQSEVAETFKPLVERLQQALAEQVKEVRVTQRLVDSPACVVVGQNELSPHLLRMLKAAGQEAPEVKPVLEINPDHALIARIRDASDAEFGDWAALLLDQALLAEGAQIADPAAFVKRLNGLLLKA.

The interval 1–346 is a; substrate-binding; it reads MSQTTTNSAS…SADLPLNVSR (346 aa). The b stretch occupies residues 347-563; it reads EILQESRDVR…QNELSPHLLR (217 aa). The c stretch occupies residues 564 to 635; that stretch reads MLKAAGQEAP…KRLNGLLLKA (72 aa).

It belongs to the heat shock protein 90 family. Homodimer.

It is found in the cytoplasm. Its function is as follows. Molecular chaperone. Has ATPase activity. The polypeptide is Chaperone protein HtpG (Bordetella parapertussis (strain 12822 / ATCC BAA-587 / NCTC 13253)).